Consider the following 253-residue polypeptide: uncharacterized protein (253 aa).

Residues Ile17, Ser36, Asp62, Asn89, Tyr158, Lys162, Val191, and Thr193 each contribute to the NADP(+) site. Tyr158 functions as the Proton donor in the catalytic mechanism. The Lowers pKa of active site Tyr role is filled by Lys162.

Belongs to the short-chain dehydrogenases/reductases (SDR) family.

Its subcellular location is the cytoplasm. The protein localises to the nucleus. This is an uncharacterized protein from Schizosaccharomyces pombe (strain 972 / ATCC 24843) (Fission yeast).